Reading from the N-terminus, the 597-residue chain is Elongation factor 4 (597 aa).

Residues 2–184 (KNIRNFSIIA…TIVAKVPAPE (183 aa)) form the tr-type G domain. GTP contacts are provided by residues 14–19 (DHGKST) and 131–134 (NKID).

The protein belongs to the TRAFAC class translation factor GTPase superfamily. Classic translation factor GTPase family. LepA subfamily.

It localises to the cell inner membrane. The catalysed reaction is GTP + H2O = GDP + phosphate + H(+). In terms of biological role, required for accurate and efficient protein synthesis under certain stress conditions. May act as a fidelity factor of the translation reaction, by catalyzing a one-codon backward translocation of tRNAs on improperly translocated ribosomes. Back-translocation proceeds from a post-translocation (POST) complex to a pre-translocation (PRE) complex, thus giving elongation factor G a second chance to translocate the tRNAs correctly. Binds to ribosomes in a GTP-dependent manner. This is Elongation factor 4 from Francisella tularensis subsp. mediasiatica (strain FSC147).